Reading from the N-terminus, the 230-residue chain is Ion-translocating oxidoreductase complex subunit E (230 aa).

The Cytoplasmic segment spans residues 1-17; it reads MSENRTLMLNGMWNNNP. The next 2 helical transmembrane spans lie at 18–38 and 39–59; these read ALVQLLGLCPLLAVSSTVTNA and LGLGIATLLVLVGSNVTVSLV. Over 60–68 the chain is Cytoplasmic; it reads RDYVPKEVR. The helical transmembrane segment at 69–89 threads the bilayer; that stretch reads IPVFVMIIASLVTCVQLLMNA. At 90–92 the chain is on the periplasmic side; that stretch reads YAY. The helical transmembrane segment at 93–113 threads the bilayer; it reads GLYLSLGIFIPLIVTNCIIIG. The Cytoplasmic segment spans residues 114–123; it reads RAEAFASKND. The helical transmembrane segment at 124–144 threads the bilayer; sequence VLPAALDGFWMGLGMTSVLVV. Residues 145–181 are Periplasmic-facing; it reads LGSLREIIGNGTLFDGADLLLGEWAKVLRIEVFHFDS. A helical membrane pass occupies residues 182–202; it reads AFLLALLPPGAFIGVGFLIAA. The Cytoplasmic segment spans residues 203–230; that stretch reads KSVIDKQIAARQPKQQKQAIERARVTNV.

The protein belongs to the NqrDE/RnfAE family. The complex is composed of six subunits: RnfA, RnfB, RnfC, RnfD, RnfE and RnfG.

The protein localises to the cell inner membrane. Functionally, part of a membrane-bound complex that couples electron transfer with translocation of ions across the membrane. This is Ion-translocating oxidoreductase complex subunit E from Vibrio cholerae serotype O1 (strain ATCC 39541 / Classical Ogawa 395 / O395).